Here is a 250-residue protein sequence, read N- to C-terminus: ATP synthase subunit a (250 aa).

6 consecutive transmembrane segments (helical) span residues 29 to 49 (ASLF…FATS), 84 to 104 (FFPM…LGMM), 114 to 134 (IVVT…YGFY), 143 to 163 (LFVP…IEVI), 189 to 209 (VFAG…GGAL), and 216 to 236 (VALT…FAVL).

The protein belongs to the ATPase A chain family. In terms of assembly, F-type ATPases have 2 components, CF(1) - the catalytic core - and CF(0) - the membrane proton channel. CF(1) has five subunits: alpha(3), beta(3), gamma(1), delta(1), epsilon(1). CF(0) has three main subunits: a(1), b(2) and c(9-12). The alpha and beta chains form an alternating ring which encloses part of the gamma chain. CF(1) is attached to CF(0) by a central stalk formed by the gamma and epsilon chains, while a peripheral stalk is formed by the delta and b chains.

The protein localises to the cell inner membrane. Its function is as follows. Key component of the proton channel; it plays a direct role in the translocation of protons across the membrane. The polypeptide is ATP synthase subunit a (Allorhizobium ampelinum (strain ATCC BAA-846 / DSM 112012 / S4) (Agrobacterium vitis (strain S4))).